Here is an 83-residue protein sequence, read N- to C-terminus: Exodeoxyribonuclease 7 small subunit (83 aa).

Belongs to the XseB family. As to quaternary structure, heterooligomer composed of large and small subunits.

The protein localises to the cytoplasm. It carries out the reaction Exonucleolytic cleavage in either 5'- to 3'- or 3'- to 5'-direction to yield nucleoside 5'-phosphates.. In terms of biological role, bidirectionally degrades single-stranded DNA into large acid-insoluble oligonucleotides, which are then degraded further into small acid-soluble oligonucleotides. The polypeptide is Exodeoxyribonuclease 7 small subunit (Bradyrhizobium sp. (strain BTAi1 / ATCC BAA-1182)).